Reading from the N-terminus, the 226-residue chain is Exopolysaccharide production protein ExoY (226 aa).

The helical transmembrane segment at 34–54 (VLAASVALLLFSPLFLLIMAL) threads the bilayer.

Belongs to the bacterial sugar transferase family.

The protein resides in the cell membrane. Its pathway is glycan metabolism; exopolysaccharide biosynthesis. Its function is as follows. Needed for the addition of the first sugar (galactose) to the isoprenoid carrier. May function as a sugar transferase. The protein is Exopolysaccharide production protein ExoY (exoY) of Rhizobium meliloti (strain 1021) (Ensifer meliloti).